Here is a 176-residue protein sequence, read N- to C-terminus: Peptidoglycan-associated lipoprotein (176 aa).

An N-terminal signal peptide occupies residues 1-21 (MKAGSFYKLGLLVASAVLVAA). Residue C22 is the site of N-palmitoyl cysteine attachment. The S-diacylglycerol cysteine moiety is linked to residue C22. In terms of domain architecture, OmpA-like spans 60–176 (YTTQAPHNQL…RVEFIYEATR (117 aa)).

This sequence belongs to the Pal lipoprotein family. In terms of assembly, the Tol-Pal system is composed of five core proteins: the inner membrane proteins TolA, TolQ and TolR, the periplasmic protein TolB and the outer membrane protein Pal. They form a network linking the inner and outer membranes and the peptidoglycan layer.

The protein localises to the cell outer membrane. Part of the Tol-Pal system, which plays a role in outer membrane invagination during cell division and is important for maintaining outer membrane integrity. Very strongly associated with the peptidoglycan. The protein is Peptidoglycan-associated lipoprotein of Legionella pneumophila.